Here is a 442-residue protein sequence, read N- to C-terminus: D-serine dehydratase (442 aa).

N6-(pyridoxal phosphate)lysine is present on Lys-118.

It belongs to the serine/threonine dehydratase family. DsdA subfamily. In terms of assembly, monomer. Requires pyridoxal 5'-phosphate as cofactor.

The catalysed reaction is D-serine = pyruvate + NH4(+). This is D-serine dehydratase from Escherichia coli (strain 55989 / EAEC).